A 492-amino-acid chain; its full sequence is Catalase isozyme 1 (492 aa).

Active-site residues include His65 and Asn138. Tyr348 is a binding site for heme.

It belongs to the catalase family. As to quaternary structure, homotetramer. Requires heme as cofactor.

The protein resides in the peroxisome. The protein localises to the glyoxysome. The catalysed reaction is 2 H2O2 = O2 + 2 H2O. Functionally, occurs in almost all aerobically respiring organisms and serves to protect cells from the toxic effects of hydrogen peroxide. The protein is Catalase isozyme 1 (CAT1) of Solanum tuberosum (Potato).